The chain runs to 203 residues: Snake venom metalloproteinase atroxase (203 aa).

E1 is modified (pyrrolidone carboxylic acid (Glu)). N5 carries an N-linked (GlcNAc...) asparagine glycan. The Peptidase M12B domain maps to 9 to 203 (RYIELVVVAD…KQYNPQIXNK (195 aa)). E12 and D96 together coordinate Ca(2+). Position 145 (H145) interacts with Zn(2+). Residue E146 is part of the active site. Zn(2+) contacts are provided by H149 and H155. Residues C160 and C167 are joined by a disulfide bond. N202 serves as a coordination point for Ca(2+).

It belongs to the venom metalloproteinase (M12B) family. P-I subfamily. Monomer. Zn(2+) is required as a cofactor. The N-terminus is blocked. In terms of tissue distribution, expressed by the venom gland.

It localises to the secreted. It carries out the reaction Cleavage of 5-His-|-Leu-6, 9-Ser-|-His-10, 10-His-|-Leu-11, 14-Ala-|-Leu-15 and 16-Tyr-|-Leu-17 in insulin B chain.. With respect to regulation, inhibited by EDTA and alpha2-macroglobulin. Its function is as follows. Snake venom zinc metalloprotease that has Aalpha, Bbeta fibrin(ogen)olytic activities. It cleaves the Aalpha chain of fibrinogen first followed by the Bbeta chain and shows no effect on the gamma chain. Does not induce or inhibit platelet aggregation, and is unable to activate plasminogen. Exhibits low lethality when tested on mice. Intravenous administration results in thrombolysis within one hour followed by recanalization. Fibrinogenolytic activity results in a 60% decrease in the rat's plasma fibrinogen level. Histological examination of kidney, liver, heart and lung tissue shows no necrosis nor hemorrhage. The protein is Snake venom metalloproteinase atroxase of Crotalus atrox (Western diamondback rattlesnake).